Reading from the N-terminus, the 635-residue chain is Surface protein F (635 aa).

A signal peptide spans 1–37 (MAKYRGKPFQLYVKLSCSTMMATSIILTNILPYDAQA). Basic and acidic residues-rich tracts occupy residues 101-112 (NELDSKDNKSSH) and 193-202 (KSKDASKDTS). Disordered regions lie at residues 101-122 (NELDSKDNKSSHTEMNGQSDID) and 192-228 (HKSKDASKDTSEDPAVSTTDNNHEVAKTPNNDGSGHV). The LPXTG sorting signal signature appears at 597–601 (LPKAG). At alanine 600 the chain carries Pentaglycyl murein peptidoglycan amidated alanine. Positions 601–635 (GETIKEHWLPISVIVGAMGVLMIWLSRRNKLKNKA) are cleaved as a propeptide — removed by sortase.

It is found in the secreted. Its subcellular location is the cell wall. The sequence is that of Surface protein F from Staphylococcus aureus (strain NCTC 8325 / PS 47).